A 174-amino-acid polypeptide reads, in one-letter code: U-stichotoxin-Hau2a (174 aa).

Positions 1 to 18 (MKPIFIVALLFSTCLVNA) are cleaved as a signal peptide. Residues 19–33 (KPSINDADIKREPEP) constitute a propeptide that is removed on maturation. A Hydroxyproline modification is found at Pro-39. Intrachain disulfides connect Cys-40-Cys-51 and Cys-43-Cys-58. Residues 61-67 (RKREPEP) constitute a propeptide that is removed on maturation. A Hydroxyproline modification is found at Pro-73. Intrachain disulfides connect Cys-74/Cys-85 and Cys-77/Cys-92. The propeptide occupies 95–101 (RKREPEP). Pro-107 is subject to Hydroxyproline. 2 disulfide bridges follow: Cys-108–Cys-119 and Cys-111–Cys-126. Positions 129–135 (RKREPEP) are excised as a propeptide. Pro-141 is modified (hydroxyproline). 2 disulfides stabilise this stretch: Cys-142–Cys-153 and Cys-145–Cys-160. Positions 163–174 (RKREPENQDLWS) are excised as a propeptide.

This sequence belongs to the sea anemone BBH family.

It localises to the secreted. The protein resides in the nematocyst. Functionally, neurotoxin that paralyzes freshwater crabs at high concentration. This is U-stichotoxin-Hau2a from Heteractis aurora (Banded sea anemone).